The primary structure comprises 220 residues: Ribosomal RNA large subunit methyltransferase E (220 aa).

S-adenosyl-L-methionine-binding residues include glycine 60, tryptophan 62, aspartate 92, aspartate 108, and aspartate 133. The active-site Proton acceptor is lysine 173.

Belongs to the class I-like SAM-binding methyltransferase superfamily. RNA methyltransferase RlmE family.

It is found in the cytoplasm. The catalysed reaction is uridine(2552) in 23S rRNA + S-adenosyl-L-methionine = 2'-O-methyluridine(2552) in 23S rRNA + S-adenosyl-L-homocysteine + H(+). Its function is as follows. Specifically methylates the uridine in position 2552 of 23S rRNA at the 2'-O position of the ribose in the fully assembled 50S ribosomal subunit. This is Ribosomal RNA large subunit methyltransferase E from Burkholderia multivorans (strain ATCC 17616 / 249).